Reading from the N-terminus, the 296-residue chain is tRNA dimethylallyltransferase (296 aa).

2–9 lines the ATP pocket; sequence GPTASGKT. A substrate-binding site is contributed by 4 to 9; sequence TASGKT. Interaction with substrate tRNA regions lie at residues 27-30, 151-155, and 232-237; these read DSAL, QRLSR, and RCVGYR.

The protein belongs to the IPP transferase family. In terms of assembly, monomer. Mg(2+) is required as a cofactor.

The catalysed reaction is adenosine(37) in tRNA + dimethylallyl diphosphate = N(6)-dimethylallyladenosine(37) in tRNA + diphosphate. Its function is as follows. Catalyzes the transfer of a dimethylallyl group onto the adenine at position 37 in tRNAs that read codons beginning with uridine, leading to the formation of N6-(dimethylallyl)adenosine (i(6)A). The protein is tRNA dimethylallyltransferase of Shewanella frigidimarina (strain NCIMB 400).